The primary structure comprises 145 residues: Major pollen allergen Lig v 1 (145 aa).

3 disulfides stabilise this stretch: cysteine 19-cysteine 90, cysteine 22-cysteine 131, and cysteine 43-cysteine 78. Asparagine 111 is a glycosylation site (N-linked (GlcNAc...) asparagine).

Belongs to the Ole e I family.

It is found in the secreted. The polypeptide is Major pollen allergen Lig v 1 (Ligustrum vulgare (Common privet)).